A 305-amino-acid chain; its full sequence is Formamidopyrimidine-DNA glycosylase (305 aa).

Catalysis depends on P2, which acts as the Schiff-base intermediate with DNA. The active-site Proton donor is E3. K59 functions as the Proton donor; for beta-elimination activity in the catalytic mechanism. 3 residues coordinate DNA: H92, R111, and R154. Residues 239–273 (QVFDRAGEPCPVCGTPIRKVAVAQRGTHFCPRCQP) form an FPG-type zinc finger. R263 (proton donor; for delta-elimination activity) is an active-site residue. Residues 282–305 (PRRARPGRRGNSVRVAAEPPGTYE) form a disordered region.

Belongs to the FPG family. In terms of assembly, monomer. It depends on Zn(2+) as a cofactor.

It carries out the reaction Hydrolysis of DNA containing ring-opened 7-methylguanine residues, releasing 2,6-diamino-4-hydroxy-5-(N-methyl)formamidopyrimidine.. The catalysed reaction is 2'-deoxyribonucleotide-(2'-deoxyribose 5'-phosphate)-2'-deoxyribonucleotide-DNA = a 3'-end 2'-deoxyribonucleotide-(2,3-dehydro-2,3-deoxyribose 5'-phosphate)-DNA + a 5'-end 5'-phospho-2'-deoxyribonucleoside-DNA + H(+). Its function is as follows. Involved in base excision repair of DNA damaged by oxidation or by mutagenic agents. Acts as a DNA glycosylase that recognizes and removes damaged bases. Has a preference for oxidized purines, such as 7,8-dihydro-8-oxoguanine (8-oxoG). Has AP (apurinic/apyrimidinic) lyase activity and introduces nicks in the DNA strand. Cleaves the DNA backbone by beta-delta elimination to generate a single-strand break at the site of the removed base with both 3'- and 5'-phosphates. The sequence is that of Formamidopyrimidine-DNA glycosylase from Symbiobacterium thermophilum (strain DSM 24528 / JCM 14929 / IAM 14863 / T).